The sequence spans 435 residues: Methylenetetrahydrofolate--tRNA-(uracil-5-)-methyltransferase TrmFO (435 aa).

7-12 (GAGLAG) contacts FAD.

Belongs to the MnmG family. TrmFO subfamily. Requires FAD as cofactor.

Its subcellular location is the cytoplasm. It catalyses the reaction uridine(54) in tRNA + (6R)-5,10-methylene-5,6,7,8-tetrahydrofolate + NADH + H(+) = 5-methyluridine(54) in tRNA + (6S)-5,6,7,8-tetrahydrofolate + NAD(+). The enzyme catalyses uridine(54) in tRNA + (6R)-5,10-methylene-5,6,7,8-tetrahydrofolate + NADPH + H(+) = 5-methyluridine(54) in tRNA + (6S)-5,6,7,8-tetrahydrofolate + NADP(+). In terms of biological role, catalyzes the folate-dependent formation of 5-methyl-uridine at position 54 (M-5-U54) in all tRNAs. This chain is Methylenetetrahydrofolate--tRNA-(uracil-5-)-methyltransferase TrmFO, found in Thermotoga sp. (strain RQ2).